Here is a 361-residue protein sequence, read N- to C-terminus: Peptide chain release factor 1 (361 aa).

Residue Q237 is modified to N5-methylglutamine. Over residues 284 to 296 the composition is skewed to basic and acidic residues; that stretch reads EDEKRRSEEDSTR. The interval 284–305 is disordered; sequence EDEKRRSEEDSTRRNLVSSGDR.

It belongs to the prokaryotic/mitochondrial release factor family. Methylated by PrmC. Methylation increases the termination efficiency of RF1.

The protein resides in the cytoplasm. Functionally, peptide chain release factor 1 directs the termination of translation in response to the peptide chain termination codons UAG and UAA. The protein is Peptide chain release factor 1 of Shewanella piezotolerans (strain WP3 / JCM 13877).